Here is a 197-residue protein sequence, read N- to C-terminus: dCTP deaminase (197 aa).

Residues 110 to 115 (RSSLAR), Asp128, 136 to 138 (VLE), Tyr171, and Gln182 each bind dCTP. Glu138 acts as the Proton donor/acceptor in catalysis.

This sequence belongs to the dCTP deaminase family. Homotrimer.

The catalysed reaction is dCTP + H2O + H(+) = dUTP + NH4(+). Its pathway is pyrimidine metabolism; dUMP biosynthesis; dUMP from dCTP (dUTP route): step 1/2. Its function is as follows. Catalyzes the deamination of dCTP to dUTP. The sequence is that of dCTP deaminase from Alteromonas mediterranea (strain DSM 17117 / CIP 110805 / LMG 28347 / Deep ecotype).